The chain runs to 178 residues: uncharacterized protein (178 aa).

Residues 1-13 (MEVASSSSACQFD) are compositionally biased toward polar residues. Disordered stretches follow at residues 1 to 24 (MEVASSSSACQFDNLNNNNNELKP) and 47 to 114 (WPSR…KKEK).

This is an uncharacterized protein from Caenorhabditis elegans.